A 324-amino-acid polypeptide reads, in one-letter code: Galectin-4 (324 aa).

2 Galectin domains span residues 19–150 and 196–324; these read YKRP…INFL and YVGT…YVQI. A beta-D-galactoside is bound at residue 257-263; sequence WGSEERK. S259 is modified (phosphoserine).

In terms of assembly, monomer. In terms of tissue distribution, highly expressed in full-length form in small and large intestine and stomach but was not detected in other tissues including lung, liver, kidney and spleen.

In terms of biological role, galectin that binds lactose and a related range of sugars. The sequence is that of Galectin-4 (Lgals4) from Rattus norvegicus (Rat).